Reading from the N-terminus, the 539-residue chain is MYLSRFLSIHALWVTVSSVMQPYPLVWGHYDLCKTQIYTEEGKVWDYMACQPESTDMTKYLKVKLDPPDITCGDPPETFCAMGNPYMCNNECDASTPELAHPPELMFDFEGRHPSTFWQSATWKEYPKPLQVNITLSWSKTIELTDNIVITFESGRPDQMILEKSLDYGRTWQPYQYYATDCLDAFHMDPKSVKDLSQHTVLEIICTEEYSTGYTTNSKIIHFEIKDRFAFFAGPRLRNMASLYGQLDTTKKLRDFFTVTDLRIRLLRPAVGEIFVDELHLARYFYAISDIKVRGRCKCNLHATVCVYDNSKLTCECEHNTTGPDCGKCKKNYQGRPWSPGSYLPIPKGTANTCIPSISSIGNCECFGHSNRCSYIDLLNTVICVSCKHNTRGQHCELCRLGYFRNASAQLDDENVCIECYCNPLGSIHDRCNGSGFCECKTGTTGPKCDECLPGNSWHYGCQPNVCDNELLHCQNGGTCHNNVRCLCPAAYTGILCEKLRCEEAGSCGSDSGQGAPPHGSPALLLLTTLLGTASPLVF.

Positions 1–28 (MYLSRFLSIHALWVTVSSVMQPYPLVWG) are cleaved as a signal peptide. Cystine bridges form between cysteine 33-cysteine 50, cysteine 72-cysteine 92, and cysteine 80-cysteine 88. The Laminin N-terminal domain occupies 46 to 296 (DYMACQPEST…AISDIKVRGR (251 aa)). Residues 80 to 91 (CAMGNPYMCNNE) are NGL discriminant loop I. Asparagine 133 is a glycosylation site (N-linked (GlcNAc...) asparagine). Cysteine 182 and cysteine 206 are oxidised to a cystine. Residues 208 to 214 (EEYSTGY) are NGL discriminant loop II. Residues 273 to 275 (EIF) are NGL discriminant loop III. Cystine bridges form between cysteine 297–cysteine 306, cysteine 299–cysteine 315, cysteine 317–cysteine 326, cysteine 329–cysteine 354, cysteine 364–cysteine 373, cysteine 366–cysteine 384, cysteine 387–cysteine 396, cysteine 399–cysteine 417, cysteine 420–cysteine 432, cysteine 422–cysteine 438, cysteine 440–cysteine 449, cysteine 452–cysteine 462, cysteine 467–cysteine 480, cysteine 474–cysteine 486, and cysteine 488–cysteine 497. 3 consecutive Laminin EGF-like domains span residues 297–356 (CKCN…TCIP), 364–419 (CECF…VCIE), and 420–469 (CYCN…VCDN). N-linked (GlcNAc...) asparagine glycosylation is present at asparagine 320. Asparagine 406 carries N-linked (GlcNAc...) asparagine glycosylation. N-linked (GlcNAc...) asparagine glycosylation is present at asparagine 433. Residue serine 510 is the site of GPI-anchor amidated serine attachment. Residues 511-539 (DSGQGAPPHGSPALLLLTTLLGTASPLVF) constitute a propeptide, removed in mature form.

In terms of assembly, interacts with NGL1. Post-translationally, N-glycosylated. Highly expressed in the thalamus, with very low expression, if any, in other tissues.

The protein resides in the cell membrane. Involved in controlling patterning and neuronal circuit formation at the laminar, cellular, subcellular and synaptic levels. Promotes neurite outgrowth of both axons and dendrites. The protein is Netrin-G1 (NTNG1) of Homo sapiens (Human).